Here is a 189-residue protein sequence, read N- to C-terminus: Calcium and integrin-binding family member 2 (189 aa).

3 consecutive EF-hand domains span residues 68–103, 105–140, and 146–181; these read RENP…FSEQ, PRDI…MTKN, and EHQQ…APDF. Positions 118, 120, 122, 129, 159, 161, 163, 165, and 170 each coordinate Ca(2+).

Monomer. Homodimer.

Its subcellular location is the cytoplasm. Its function is as follows. Calcium- and integrin-binding protein. Plays a role in intracellular calcium homeostasis. Critical for proper photoreceptor cell maintenance and function. Required for prevention of light-dependent retinal degeneration. In Drosophila melanogaster (Fruit fly), this protein is Calcium and integrin-binding family member 2.